Reading from the N-terminus, the 107-residue chain is Auxin-responsive protein SAUR50 (107 aa).

It belongs to the ARG7 family. As to quaternary structure, interacts with BZR1. As to expression, expressed in cotyledons, leaves, flowers and siliques.

It is found in the cell membrane. In terms of biological role, provide a mechanistic link between auxin and plasma membrane H(+)-ATPases (PM H(+)-ATPases, e.g. AHA1 and AHA2), and triggers PM H(+)-ATPases activity by promoting phosphorylation of their C-terminal autoinhibitory domain as a result of PP2C-D subfamily of type 2C phosphatases inhibition, thus leading to the acidification of the apoplast and the facilitation of solutes and water uptake to drive cell expansion. Triggers plant growth probably by promoting cell elongation. Regulates branch angles and bending. Effector of hormonal and environmental signals in plant growth. The chain is Auxin-responsive protein SAUR50 from Arabidopsis thaliana (Mouse-ear cress).